The primary structure comprises 641 residues: Soluble starch synthase 1, chloroplastic/amyloplastic (641 aa).

Residues 1–113 (MATAAGMGIG…DSIDKTIFVA (113 aa)) constitute a chloroplast transit peptide. The segment at 62–96 (TFLVPTSTPPAPTQSPAPAPTPPPLPDSGVGEIEP) is disordered. Residues 68 to 87 (STPPAPTQSPAPAPTPPPLP) are compositionally biased toward pro residues. Lys-147 is a binding site for ADP-alpha-D-glucose.

The protein belongs to the glycosyltransferase 1 family. Bacterial/plant glycogen synthase subfamily.

It localises to the plastid. The protein localises to the chloroplast. Its subcellular location is the amyloplast. The catalysed reaction is [(1-&gt;4)-alpha-D-glucosyl](n) + ADP-alpha-D-glucose = [(1-&gt;4)-alpha-D-glucosyl](n+1) + ADP + H(+). It participates in glycan biosynthesis; starch biosynthesis. This is Soluble starch synthase 1, chloroplastic/amyloplastic from Oryza sativa subsp. indica (Rice).